The following is a 917-amino-acid chain: Translation initiation factor IF-2 (917 aa).

Residues 102-249 (EKSQAEEQAL…KWTAEPKAPE (148 aa)) are compositionally biased toward basic and acidic residues. The interval 102–326 (EKSQAEEQAL…KSSTLQQGFH (225 aa)) is disordered. The segment covering 279-293 (RRGRTAKAPRAKKNN) has biased composition (basic residues). Over residues 294–306 (RHSEKADREEARA) the composition is skewed to basic and acidic residues. The tr-type G domain occupies 416 to 585 (SRAPVVTIMG…LLQAEVLELK (170 aa)). The tract at residues 425 to 432 (GHVDHGKT) is G1. 425-432 (GHVDHGKT) contacts GTP. A G2 region spans residues 450-454 (GITQH). The interval 471-474 (DTPG) is G3. GTP is bound by residues 471-475 (DTPGH) and 525-528 (NKID). The interval 525 to 528 (NKID) is G4. A G5 region spans residues 561–563 (SAK).

Belongs to the TRAFAC class translation factor GTPase superfamily. Classic translation factor GTPase family. IF-2 subfamily.

The protein localises to the cytoplasm. One of the essential components for the initiation of protein synthesis. Protects formylmethionyl-tRNA from spontaneous hydrolysis and promotes its binding to the 30S ribosomal subunits. Also involved in the hydrolysis of GTP during the formation of the 70S ribosomal complex. The sequence is that of Translation initiation factor IF-2 (infB) from Proteus vulgaris.